A 610-amino-acid polypeptide reads, in one-letter code: Dopamine beta-hydroxylase (610 aa).

Over 1 to 9 (MQVPSPSVR) the chain is Cytoplasmic. A helical; Signal-anchor for type II membrane protein membrane pass occupies residues 10–30 (EAASMYGTAVAVFLVILVAAL). Residues 31–610 (QGSAPAESPF…TVLNISGGKG (580 aa)) are Intragranular-facing. The region spanning 50–166 (GTLELSWNIS…GTVHLVYGFL (117 aa)) is the DOMON domain. 6 cysteine pairs are disulfide-bonded: Cys-147/Cys-589, Cys-225/Cys-276, Cys-262/Cys-288, Cys-383/Cys-496, Cys-387/Cys-558, and Cys-459/Cys-481. N-linked (GlcNAc...) asparagine glycosylation occurs at Asn-177. Tyr-223 is an active-site residue. His-255 and His-256 together coordinate Cu(2+). Residues His-326, His-405, His-407, and Met-480 each contribute to the Cu(2+) site. Residue His-405 is part of the active site. N-linked (GlcNAc...) asparagine glycosylation occurs at Asn-559. The tract at residues 585–610 (PTPHCPASQAQSPAGPTVLNISGGKG) is disordered.

Belongs to the copper type II ascorbate-dependent monooxygenase family. In terms of assembly, homotetramer; composed of two disulfide-linked dimers. Cu(2+) serves as cofactor. Post-translationally, proteolytic cleavage after the membrane-anchor leads to the release of the soluble form. In terms of processing, N-glycosylated. In terms of tissue distribution, detected in chromaffin granules in the adrenal medulla (at protein level). Detected in adrenal medulla.

It is found in the cytoplasmic vesicle. Its subcellular location is the secretory vesicle lumen. It localises to the secretory vesicle. The protein localises to the chromaffin granule lumen. The protein resides in the secretory vesicle membrane. It is found in the chromaffin granule membrane. The enzyme catalyses dopamine + 2 L-ascorbate + O2 = (R)-noradrenaline + 2 monodehydro-L-ascorbate radical + H2O. The protein operates within catecholamine biosynthesis; (R)-noradrenaline biosynthesis; (R)-noradrenaline from dopamine: step 1/1. Catalyzes the hydroxylation of dopamine to noradrenaline (also known as norepinephrine), and is thus vital for regulation of these neurotransmitters. In Bos taurus (Bovine), this protein is Dopamine beta-hydroxylase (DBH).